A 187-amino-acid polypeptide reads, in one-letter code: Peptidyl-tRNA hydrolase (187 aa).

His-14 contributes to the tRNA binding site. The active-site Proton acceptor is the His-19. Residues Tyr-62, Asn-64, and Asn-110 each coordinate tRNA.

The protein belongs to the PTH family. Monomer.

The protein resides in the cytoplasm. The catalysed reaction is an N-acyl-L-alpha-aminoacyl-tRNA + H2O = an N-acyl-L-amino acid + a tRNA + H(+). Its function is as follows. Hydrolyzes ribosome-free peptidyl-tRNAs (with 1 or more amino acids incorporated), which drop off the ribosome during protein synthesis, or as a result of ribosome stalling. In terms of biological role, catalyzes the release of premature peptidyl moieties from peptidyl-tRNA molecules trapped in stalled 50S ribosomal subunits, and thus maintains levels of free tRNAs and 50S ribosomes. In Chlorobaculum tepidum (strain ATCC 49652 / DSM 12025 / NBRC 103806 / TLS) (Chlorobium tepidum), this protein is Peptidyl-tRNA hydrolase.